The following is a 295-amino-acid chain: uncharacterized protein (295 aa).

Residues 8 to 106 (QKTINWIESH…HMPPGAYRTF (99 aa)) form the HTH araC/xylS-type domain. Positions 25–46 (EDIVNVSSFSKFHFHRIFQKEV) form a DNA-binding region, H-T-H motif.

Its function is as follows. Probable transcriptional regulator. This is an uncharacterized protein from Bacillus subtilis (strain 168).